Reading from the N-terminus, the 161-residue chain is Small ribosomal subunit protein uS8m (161 aa).

It belongs to the universal ribosomal protein uS8 family. Component of the mitochondrial small ribosomal subunit (mt-SSU). Mature N.crassa 74S mitochondrial ribosomes consist of a small (37S) and a large (54S) subunit. The 37S small subunit contains a 16S ribosomal RNA (16S mt-rRNA) and 32 different proteins. The 54S large subunit contains a 23S rRNA (23S mt-rRNA) and 42 different proteins.

Its subcellular location is the mitochondrion. In terms of biological role, component of the mitochondrial ribosome (mitoribosome), a dedicated translation machinery responsible for the synthesis of mitochondrial genome-encoded proteins, including at least some of the essential transmembrane subunits of the mitochondrial respiratory chain. The mitoribosomes are attached to the mitochondrial inner membrane and translation products are cotranslationally integrated into the membrane. The chain is Small ribosomal subunit protein uS8m (mrps8) from Neurospora crassa (strain ATCC 24698 / 74-OR23-1A / CBS 708.71 / DSM 1257 / FGSC 987).